We begin with the raw amino-acid sequence, 213 residues long: Protein FAM177A1 (213 aa).

M1 carries the N-acetylmethionine modification. S70 carries the phosphoserine modification. T71 bears the Phosphothreonine mark. Residues 136–173 (IDEYYRMKKEEEEEEEENRMSEEAEKQYQQNKLQTDSI) adopt a coiled-coil conformation. Residues 147–175 (EEEEEENRMSEEAEKQYQQNKLQTDSIVQ) form a disordered region. Positions 162 to 175 (QYQQNKLQTDSIVQ) are enriched in polar residues.

Belongs to the FAM177 family.

This chain is Protein FAM177A1 (FAM177A1), found in Homo sapiens (Human).